Here is a 361-residue protein sequence, read N- to C-terminus: Probable pectinesterase 50 (361 aa).

The signal sequence occupies residues 1-22 (MGYISMSVVAFLVVFASPVVLA). Residue Gln-174 coordinates substrate. Asp-197 (proton donor) is an active-site residue. Asp-218 (nucleophile) is an active-site residue. The substrate site is built by Arg-275 and Trp-277.

Belongs to the pectinesterase family. Expressed in flower buds.

It is found in the secreted. Its subcellular location is the cell wall. It catalyses the reaction [(1-&gt;4)-alpha-D-galacturonosyl methyl ester](n) + n H2O = [(1-&gt;4)-alpha-D-galacturonosyl](n) + n methanol + n H(+). The protein operates within glycan metabolism; pectin degradation; 2-dehydro-3-deoxy-D-gluconate from pectin: step 1/5. Functionally, acts in the modification of cell walls via demethylesterification of cell wall pectin. The polypeptide is Probable pectinesterase 50 (PME50) (Arabidopsis thaliana (Mouse-ear cress)).